Here is a 417-residue protein sequence, read N- to C-terminus: NADH-quinone oxidoreductase subunit D (417 aa).

The protein belongs to the complex I 49 kDa subunit family. In terms of assembly, NDH-1 is composed of 14 different subunits. Subunits NuoB, C, D, E, F, and G constitute the peripheral sector of the complex.

The protein resides in the cell inner membrane. It carries out the reaction a quinone + NADH + 5 H(+)(in) = a quinol + NAD(+) + 4 H(+)(out). In terms of biological role, NDH-1 shuttles electrons from NADH, via FMN and iron-sulfur (Fe-S) centers, to quinones in the respiratory chain. The immediate electron acceptor for the enzyme in this species is believed to be ubiquinone. Couples the redox reaction to proton translocation (for every two electrons transferred, four hydrogen ions are translocated across the cytoplasmic membrane), and thus conserves the redox energy in a proton gradient. This is NADH-quinone oxidoreductase subunit D from Nitrosococcus oceani (strain ATCC 19707 / BCRC 17464 / JCM 30415 / NCIMB 11848 / C-107).